The chain runs to 306 residues: Brix domain-containing protein C4F8.04 (306 aa).

The interval lysine 16 to glutamate 49 is disordered. Positions lysine 21–lysine 42 are enriched in basic and acidic residues. Positions proline 94 to aspartate 283 constitute a Brix domain.

This chain is Brix domain-containing protein C4F8.04, found in Schizosaccharomyces pombe (strain 972 / ATCC 24843) (Fission yeast).